We begin with the raw amino-acid sequence, 323 residues long: Beta-ketoacyl-[acyl-carrier-protein] synthase III (323 aa).

Catalysis depends on residues Cys114 and His250. The ACP-binding stretch occupies residues 251 to 255; sequence QANRR. The active site involves Asn280.

This sequence belongs to the thiolase-like superfamily. FabH family. As to quaternary structure, homodimer.

Its subcellular location is the cytoplasm. It catalyses the reaction malonyl-[ACP] + acetyl-CoA + H(+) = 3-oxobutanoyl-[ACP] + CO2 + CoA. It functions in the pathway lipid metabolism; fatty acid biosynthesis. Functionally, catalyzes the condensation reaction of fatty acid synthesis by the addition to an acyl acceptor of two carbons from malonyl-ACP. Catalyzes the first condensation reaction which initiates fatty acid synthesis and may therefore play a role in governing the total rate of fatty acid production. Possesses both acetoacetyl-ACP synthase and acetyl transacylase activities. Its substrate specificity determines the biosynthesis of branched-chain and/or straight-chain of fatty acids. The polypeptide is Beta-ketoacyl-[acyl-carrier-protein] synthase III (Rhodospirillum centenum (strain ATCC 51521 / SW)).